The chain runs to 145 residues: Basic phospholipase A2 BFPA (145 aa).

An N-terminal signal peptide occupies residues 1–27; the sequence is MNPAHLLVLLAVCVSLLGAANIPPQSL. 7 disulfide bridges follow: C38-C97, C52-C144, C54-C70, C69-C125, C76-C118, C86-C111, and C104-C116. Y53, G55, and G57 together coordinate Ca(2+). The active site involves H73. Residue D74 participates in Ca(2+) binding. Residue D119 is part of the active site.

It belongs to the phospholipase A2 family. Group I subfamily. D49 sub-subfamily. As to quaternary structure, homodimer; disulfide-linked. The cofactor is Ca(2+). In terms of tissue distribution, expressed by the venom gland.

The protein resides in the secreted. The catalysed reaction is a 1,2-diacyl-sn-glycero-3-phosphocholine + H2O = a 1-acyl-sn-glycero-3-phosphocholine + a fatty acid + H(+). Its function is as follows. Snake venom phospholipase A2 (PLA2) that inhibits blood coagulation and shows bactericidal activities against both Gram-negative and -positive bacteria (E.coli, MIC=0.4 uM and S.aureus, MIC=0.1 uM). PLA2 catalyzes the calcium-dependent hydrolysis of the 2-acyl groups in 3-sn-phosphoglycerides. The chain is Basic phospholipase A2 BFPA from Bungarus fasciatus (Banded krait).